The sequence spans 321 residues: Aspartate carbamoyltransferase catalytic subunit (321 aa).

Residues arginine 64 and threonine 65 each coordinate carbamoyl phosphate. Residue lysine 92 coordinates L-aspartate. Arginine 114, histidine 144, and glutamine 147 together coordinate carbamoyl phosphate. Positions 177 and 232 each coordinate L-aspartate. Residues glycine 273 and proline 274 each contribute to the carbamoyl phosphate site.

Belongs to the aspartate/ornithine carbamoyltransferase superfamily. ATCase family. Heterododecamer (2C3:3R2) of six catalytic PyrB chains organized as two trimers (C3), and six regulatory PyrI chains organized as three dimers (R2).

The enzyme catalyses carbamoyl phosphate + L-aspartate = N-carbamoyl-L-aspartate + phosphate + H(+). The protein operates within pyrimidine metabolism; UMP biosynthesis via de novo pathway; (S)-dihydroorotate from bicarbonate: step 2/3. Functionally, catalyzes the condensation of carbamoyl phosphate and aspartate to form carbamoyl aspartate and inorganic phosphate, the committed step in the de novo pyrimidine nucleotide biosynthesis pathway. In Alkalilimnicola ehrlichii (strain ATCC BAA-1101 / DSM 17681 / MLHE-1), this protein is Aspartate carbamoyltransferase catalytic subunit.